Here is a 358-residue protein sequence, read N- to C-terminus: MLKTPLYESHIAANAKMVDFSGWSMPINYGSQIQEHNNVREDCGIFDVSHMLAVDIQGSEAEKFLRYLLANDIAKLQENKAQYGCMLNHDAGIVDDLITYKVTDEHFRIVVNAGNRESDVAWFNQNAQNFDVAITPQTDLAIVAVQGPKAVAVIKRVVTKEIAAEIEALLPFSFKFFSKWMVARTGYTGEDGFEVILPATQVKKFWDSLLENGAQPAGLGARDTLRLEAGMHLYGADMDTSTTPLERGLGWSVDLSDEHRDFIGKKAYLAKKAQGVDTKWVGVVLKTKGVLRAGQEIDFDNGEKGYITSGSFSPTLKVAIGLAYVPKQADNPVVNIRGKELEVELVKPKFVKNGKSLI.

This sequence belongs to the GcvT family. As to quaternary structure, the glycine cleavage system is composed of four proteins: P, T, L and H.

The catalysed reaction is N(6)-[(R)-S(8)-aminomethyldihydrolipoyl]-L-lysyl-[protein] + (6S)-5,6,7,8-tetrahydrofolate = N(6)-[(R)-dihydrolipoyl]-L-lysyl-[protein] + (6R)-5,10-methylene-5,6,7,8-tetrahydrofolate + NH4(+). Functionally, the glycine cleavage system catalyzes the degradation of glycine. The polypeptide is Aminomethyltransferase (Francisella tularensis subsp. mediasiatica (strain FSC147)).